Consider the following 1407-residue polypeptide: DNA-directed RNA polymerase subunit beta' (1407 aa).

Positions 70, 72, 85, and 88 each coordinate Zn(2+). Mg(2+) contacts are provided by D460, D462, and D464. Zn(2+)-binding residues include C814, C888, C895, and C898. N6-acetyllysine is present on K972.

It belongs to the RNA polymerase beta' chain family. As to quaternary structure, the RNAP catalytic core consists of 2 alpha, 1 beta, 1 beta' and 1 omega subunit. When a sigma factor is associated with the core the holoenzyme is formed, which can initiate transcription. Mg(2+) serves as cofactor. The cofactor is Zn(2+).

It carries out the reaction RNA(n) + a ribonucleoside 5'-triphosphate = RNA(n+1) + diphosphate. In terms of biological role, DNA-dependent RNA polymerase catalyzes the transcription of DNA into RNA using the four ribonucleoside triphosphates as substrates. The sequence is that of DNA-directed RNA polymerase subunit beta' from Escherichia coli (strain SMS-3-5 / SECEC).